We begin with the raw amino-acid sequence, 409 residues long: TNF receptor-associated factor family protein DDB_G0273435/DDB_G0273505 (409 aa).

The segment at 20–59 adopts an RING-type; degenerate zinc-finger fold; the sequence is CQLCCNLMNESVSCPNGHCLCKGCFHKQIETVKSECPICC. 2 consecutive TRAF-type zinc fingers follow at residues 75 to 145 and 145 to 201; these read KHIN…EIEN and NHQD…HELS. Residues 221–250 are a coiled coil; the sequence is HQSLLKSTSKQLKQLRSSCEELETKLINND. One can recognise an MATH domain in the interval 252 to 380; that stretch reads SFNGRWIIKQ…NDQLIIKFNI (129 aa).

This sequence belongs to the TNF receptor-associated factor family. A subfamily.

Its subcellular location is the cytoplasm. Probable adapter protein and signal transducer that links members of the tumor necrosis factor receptor family to different signaling pathways by association with the receptor cytoplasmic domain and kinases. The protein is TNF receptor-associated factor family protein DDB_G0273435/DDB_G0273505 of Dictyostelium discoideum (Social amoeba).